Consider the following 193-residue polypeptide: uncharacterized protein (193 aa).

The stretch at 86–181 forms a coiled coil; it reads TKQRELLEIL…QVEEVQAEVG (96 aa).

This is an uncharacterized protein from Streptococcus pyogenes serotype M6 (strain ATCC BAA-946 / MGAS10394).